The primary structure comprises 314 residues: MIEFQKPTISTVEESENYGKFVAEPLERGYGTTLGNSLRRVLLSSLPGAAINSVQIDGVLHEFTTIDGVTEDVTQIILNLKKVAMRIDSDEQKTLEVDFSGAGELTAGDIKSDGDVEILNPDLHIATVSAGKSLHMALTAVRGRGYDSAEENKAKMELGIGVLAIDSIYTPISKVNYTVEKTRVGHRDDYDKLTLEVWTDGSVSPSESLSLGSKILSEHLALFIDLSNAGKKEMMLDPDAVETVMENKEPIEELELSVRSFNCLKRAGINTIEDLTDKTLHDMGEVRNLGRKSLEEIIQKLAERGQSFKQETEN.

The interval 1 to 227 is alpha N-terminal domain (alpha-NTD); the sequence is MIEFQKPTIS…EHLALFIDLS (227 aa). Residues 241–314 are alpha C-terminal domain (alpha-CTD); sequence VETVMENKEP…GQSFKQETEN (74 aa).

Belongs to the RNA polymerase alpha chain family. In terms of assembly, homodimer. The RNAP catalytic core consists of 2 alpha, 1 beta, 1 beta' and 1 omega subunit. When a sigma factor is associated with the core the holoenzyme is formed, which can initiate transcription.

The enzyme catalyses RNA(n) + a ribonucleoside 5'-triphosphate = RNA(n+1) + diphosphate. DNA-dependent RNA polymerase catalyzes the transcription of DNA into RNA using the four ribonucleoside triphosphates as substrates. In Oenococcus oeni (strain ATCC BAA-331 / PSU-1), this protein is DNA-directed RNA polymerase subunit alpha.